Consider the following 378-residue polypeptide: tRNA N(3)-cytidine methyltransferase METTL2 (378 aa).

Positions 78, 82, 188, 213, 239, 240, and 260 each coordinate S-adenosyl-L-methionine.

This sequence belongs to the methyltransferase superfamily. METL family. Monomer. Interacts with DALRD3.

It is found in the cytoplasm. The enzyme catalyses cytidine(32) in tRNA(Thr) + S-adenosyl-L-methionine = N(3)-methylcytidine(32) in tRNA(Thr) + S-adenosyl-L-homocysteine + H(+). The catalysed reaction is cytidine(32) in tRNA(Arg)(CCU) + S-adenosyl-L-methionine = N(3)-methylcytidine(32) in tRNA(Arg)(CCU) + S-adenosyl-L-homocysteine + H(+). S-adenosyl-L-methionine-dependent methyltransferase that mediates N(3)-methylcytidine modification of residue 32 of the tRNA anticodon loop of tRNA(Thr)(UGU) and tRNA(Arg)(CCU). N(3)-methylcytidine methylation by METTL2 requires the N6-threonylcarbamoylation of tRNA (t6A37) by the EKC/KEOPS complex as prerequisite. This is tRNA N(3)-cytidine methyltransferase METTL2 (METTL2) from Bos taurus (Bovine).